The sequence spans 123 residues: Basic myotoxic phospholipase A2 PhTX-II (123 aa).

7 disulfide bridges follow: Cys-26–Cys-116, Cys-28–Cys-45, Cys-44–Cys-95, Cys-50–Cys-123, Cys-51–Cys-88, Cys-58–Cys-81, and Cys-75–Cys-86. Ca(2+) contacts are provided by Tyr-27, Gly-29, and Gly-31. The active site involves His-48. Asp-49 provides a ligand contact to Ca(2+). Asp-89 is an active-site residue.

In terms of assembly, monomer. Requires Ca(2+) as cofactor. Expressed by the venom gland.

The protein resides in the secreted. It carries out the reaction a 1,2-diacyl-sn-glycero-3-phosphocholine + H2O = a 1-acyl-sn-glycero-3-phosphocholine + a fatty acid + H(+). P-bromophenacyl bromide (BPB) completely inhibits the catalytic and edematogenic activities. Enzymatic activity is also diminished by EDTA, heparin and crotapotins F2 and F3 from C.d.collilineatus. Inhibited by divalent cations different from calcium ions (cadmium, magnesium, manganese, zinc), since they act as competitive antagonists of this cofactor. In terms of biological role, snake venom phospholipase A2 (PLA2) that induces myotoxicity and local edema in mice. In addition, it causes neuromuscular blockade in avian neuromuscular preparations with a significant direct action on skeletal muscle function. Myotoxic action is exerted by both enzymatic and non-enzymatic mechanisms. PLA2 catalyzes the calcium-dependent hydrolysis of the 2-acyl groups in 3-sn-phosphoglycerides. The sequence is that of Basic myotoxic phospholipase A2 PhTX-II from Bothrocophias hyoprora (Amazonian hognose viper).